Here is a 279-residue protein sequence, read N- to C-terminus: Large ribosomal subunit protein uL2 (279 aa).

Disordered regions lie at residues 1-43 (MGIK…TAGR) and 207-279 (KAGR…PGKH). Over residues 8 to 22 (PTTNGRRNMTASDFS) the composition is skewed to polar residues. Positions 23–33 (EITKTKPEKSL) are enriched in basic and acidic residues. Residues 34–43 (LDSQSHTAGR) show a composition bias toward polar residues. Basic residues-rich tracts occupy residues 209–219 (GRTRWQGKRPT) and 254–279 (TLGKKTRNKKARSNKLIVRGRRPGKH).

Belongs to the universal ribosomal protein uL2 family. Part of the 50S ribosomal subunit. Forms a bridge to the 30S subunit in the 70S ribosome.

In terms of biological role, one of the primary rRNA binding proteins. Required for association of the 30S and 50S subunits to form the 70S ribosome, for tRNA binding and peptide bond formation. It has been suggested to have peptidyltransferase activity; this is somewhat controversial. Makes several contacts with the 16S rRNA in the 70S ribosome. This is Large ribosomal subunit protein uL2 from Lactiplantibacillus plantarum (strain ATCC BAA-793 / NCIMB 8826 / WCFS1) (Lactobacillus plantarum).